The following is a 123-amino-acid chain: Small ribosomal subunit protein uS13 (123 aa).

The segment at 92-123 (RKGLPVRGQKTKTNARTRKGPKKLVGAKKKSK) is disordered.

The protein belongs to the universal ribosomal protein uS13 family. In terms of assembly, part of the 30S ribosomal subunit. Forms a loose heterodimer with protein S19. Forms two bridges to the 50S subunit in the 70S ribosome.

Functionally, located at the top of the head of the 30S subunit, it contacts several helices of the 16S rRNA. In the 70S ribosome it contacts the 23S rRNA (bridge B1a) and protein L5 of the 50S subunit (bridge B1b), connecting the 2 subunits; these bridges are implicated in subunit movement. Contacts the tRNAs in the A and P-sites. This chain is Small ribosomal subunit protein uS13, found in Clostridium kluyveri (strain NBRC 12016).